A 674-amino-acid chain; its full sequence is Regulator of G-protein signaling 9 (674 aa).

The region spanning 30 to 105 (PETGVRMQNQ…PDGSLYRFQT (76 aa)) is the DEP domain. The 62-residue stretch at 219 to 280 (KQTVVAVKKE…NPWITDDTQF (62 aa)) folds into the G protein gamma domain. In terms of domain architecture, RGS spans 298 to 413 (RWAFNFSELI…YARYLKSPIY (116 aa)). The interval 533–573 (SSGLEQKGECSGSMAPRGPSVTESSEASLDTSWPRSRPRAP) is disordered. Residues 553 to 565 (VTESSEASLDTSW) are compositionally biased toward polar residues.

As to quaternary structure, heterodimer with GNB5. Interacts with RGS7BP, leading to regulate the subcellular location of the heterodimer formed with GNB5. Component of the RGS9-1-Gbeta5 complex composed of RGS9 (RGS9-1), Gbeta5 (GNB5) and RGS9BP. Interacts with PDE6G and GNAT1. In terms of processing, retinal isoform 3 is light-dependent phosphorylated at 'Ser-478'. Phosphorylation is decreased by light exposition. In terms of tissue distribution, highly expressed in the caudate and putamen, lower levels found in the hypothalamus and nucleus accumbens and very low levels in cerebellum. Not expressed in globus pallidus or cingulate cortex. Isoform 2 is expressed predominantly in pineal gland and retina. Isoform 3 is expressed in retina (abundant in photoreceptors).

Its subcellular location is the membrane. In terms of biological role, inhibits signal transduction by increasing the GTPase activity of G protein alpha subunits thereby driving them into their inactive GDP-bound form. Binds to GNAT1. Involved in phototransduction; key element in the recovery phase of visual transduction. This Homo sapiens (Human) protein is Regulator of G-protein signaling 9 (RGS9).